A 773-amino-acid polypeptide reads, in one-letter code: DNA gyrase subunit B (773 aa).

Residues 416–530 (SEIFLVEGDS…QGHVYIAQAP (115 aa)) form the Toprim domain. Positions 422, 495, and 497 each coordinate Mg(2+).

Belongs to the type II topoisomerase GyrB family. In terms of assembly, heterotetramer, composed of two GyrA and two GyrB chains. In the heterotetramer, GyrA contains the active site tyrosine that forms a transient covalent intermediate with DNA, while GyrB binds cofactors and catalyzes ATP hydrolysis. Mg(2+) is required as a cofactor. The cofactor is Mn(2+). Ca(2+) serves as cofactor.

Its subcellular location is the cytoplasm. The enzyme catalyses ATP-dependent breakage, passage and rejoining of double-stranded DNA.. Its function is as follows. A type II topoisomerase that negatively supercoils closed circular double-stranded (ds) DNA in an ATP-dependent manner to modulate DNA topology and maintain chromosomes in an underwound state. Negative supercoiling favors strand separation, and DNA replication, transcription, recombination and repair, all of which involve strand separation. Also able to catalyze the interconversion of other topological isomers of dsDNA rings, including catenanes and knotted rings. Type II topoisomerases break and join 2 DNA strands simultaneously in an ATP-dependent manner. This Helicobacter pylori (strain ATCC 700392 / 26695) (Campylobacter pylori) protein is DNA gyrase subunit B.